The following is a 284-amino-acid chain: Tropomyosin Lep s 1.0101 (284 aa).

Residues 1-273 (MEAIKKKMQA…KDRYRALADE (273 aa)) adopt a coiled-coil conformation. Residues 155 to 171 (AEDADGKSDEVSRKMAQ) show a composition bias toward basic and acidic residues. Residues 155 to 187 (AEDADGKSDEVSRKMAQVEDDLEVAEDRVKSGD) are disordered.

The protein belongs to the tropomyosin family. Homodimer.

In terms of biological role, tropomyosin, in association with the troponin complex, plays a central role in the calcium dependent regulation of muscle contraction. This Lepisma saccharinum (Silverfish) protein is Tropomyosin Lep s 1.0101.